Consider the following 324-residue polypeptide: Anthranilate phosphoribosyltransferase (324 aa).

5-phospho-alpha-D-ribose 1-diphosphate is bound by residues Gly72, Gly75 to Asp76, Thr80, Asn82 to Thr85, Lys99 to Ser107, and Ser111. Residue Gly72 participates in anthranilate binding. Position 84 (Ser84) interacts with Mg(2+). Residue Asn102 coordinates anthranilate. Arg157 is a binding site for anthranilate. 2 residues coordinate Mg(2+): Asp215 and Glu216.

Belongs to the anthranilate phosphoribosyltransferase family. Homodimer. The cofactor is Mg(2+).

It catalyses the reaction N-(5-phospho-beta-D-ribosyl)anthranilate + diphosphate = 5-phospho-alpha-D-ribose 1-diphosphate + anthranilate. Its pathway is amino-acid biosynthesis; L-tryptophan biosynthesis; L-tryptophan from chorismate: step 2/5. Catalyzes the transfer of the phosphoribosyl group of 5-phosphorylribose-1-pyrophosphate (PRPP) to anthranilate to yield N-(5'-phosphoribosyl)-anthranilate (PRA). The polypeptide is Anthranilate phosphoribosyltransferase (Pyrococcus furiosus (strain ATCC 43587 / DSM 3638 / JCM 8422 / Vc1)).